The primary structure comprises 547 residues: Chaperonin GroEL 1 (547 aa).

Residues 30-33 (TLGP), lysine 51, 87-91 (DGTTT), glycine 415, and aspartate 494 contribute to the ATP site. The interval 524–547 (PKGKAKGGGAGAGMPDYGGDDMDY) is disordered.

Belongs to the chaperonin (HSP60) family. Forms a cylinder of 14 subunits composed of two heptameric rings stacked back-to-back. Interacts with the co-chaperonin GroES.

The protein localises to the cytoplasm. The catalysed reaction is ATP + H2O + a folded polypeptide = ADP + phosphate + an unfolded polypeptide.. Its function is as follows. Together with its co-chaperonin GroES, plays an essential role in assisting protein folding. The GroEL-GroES system forms a nano-cage that allows encapsulation of the non-native substrate proteins and provides a physical environment optimized to promote and accelerate protein folding. The sequence is that of Chaperonin GroEL 1 from Myxococcus xanthus (strain DK1622).